Here is a 317-residue protein sequence, read N- to C-terminus: Acetyl-coenzyme A carboxylase carboxyl transferase subunit beta (317 aa).

The tract at residues 1 to 28 (MANNMTDTMTKFDTNNDSASLQQNGNKA) is disordered. The 263-residue stretch at 55-317 (PSTKCSSCHS…LCSVPNVDAQ (263 aa)) folds into the CoA carboxyltransferase N-terminal domain. Cys-59, Cys-62, Cys-78, and Cys-81 together coordinate Zn(2+). The C4-type zinc finger occupies 59–81 (CSSCHSVITNTALIFNCYVCPHC).

This sequence belongs to the AccD/PCCB family. In terms of assembly, acetyl-CoA carboxylase is a heterohexamer composed of biotin carboxyl carrier protein (AccB), biotin carboxylase (AccC) and two subunits each of ACCase subunit alpha (AccA) and ACCase subunit beta (AccD). Zn(2+) is required as a cofactor.

The protein resides in the cytoplasm. It catalyses the reaction N(6)-carboxybiotinyl-L-lysyl-[protein] + acetyl-CoA = N(6)-biotinyl-L-lysyl-[protein] + malonyl-CoA. It participates in lipid metabolism; malonyl-CoA biosynthesis; malonyl-CoA from acetyl-CoA: step 1/1. Component of the acetyl coenzyme A carboxylase (ACC) complex. Biotin carboxylase (BC) catalyzes the carboxylation of biotin on its carrier protein (BCCP) and then the CO(2) group is transferred by the transcarboxylase to acetyl-CoA to form malonyl-CoA. The chain is Acetyl-coenzyme A carboxylase carboxyl transferase subunit beta from Psychrobacter arcticus (strain DSM 17307 / VKM B-2377 / 273-4).